We begin with the raw amino-acid sequence, 540 residues long: MATVTRLCVTKSVPTVNGQFPGPKLVVREGDTLVIRVTNNINNNVTFHWHGIRQVRSGWADGPAYITQCPIRSGGSYVYRFTVTGQRGTLWWHAHFSWLRATLYGPLVILPPRGVAYPFPKPHREVPLLLGEWFNADPEAVIKQALQTGGGPNVSDAYTFNGLPGPTYNCSSSNDTFKLRVRPGKTYLLRLINAALNDELFFGVANHTLMVVQADASYVKPFAATALVISPGQTMDVLLTAAANNPPSRSFAIAVAPYTNTVGTFDNTTAVAVLEYYGAATSAAALRSLPLPSLPAYNDTGAVANFSASFRSLASAQYPARVPRTVDRHFFFAVGLGADPCQSPVNGTCQGPNNTRFAASMNNVSFVMPRTSLLQAHYQRRYNGVLAANFPAAPRTPFNYTGTPPNNTFVTHGTRVVPLSFNTTVEVVLQDTSILGAESHPLHLHGYDFYVVGTGFGNYDASNDTAKYNLVDPVQRNTISVPTAGWVAIRFVADNPGVWIMHCHLDVHLSWGLSMAWLVNDGPLPNQKLPPPPSDIPMCS.

3 Plastocyanin-like domains span residues 1-114, 124-279, and 389-523; these read MATV…PPRG, REVP…YYGA, and NFPA…NDGP. The Cu cation site is built by histidine 48, histidine 50, histidine 93, and histidine 95. Cu cation is bound by residues histidine 440, histidine 443, histidine 445, histidine 502, cysteine 503, histidine 504, and histidine 508.

This sequence belongs to the multicopper oxidase family. Requires Cu cation as cofactor.

The protein resides in the secreted. Its subcellular location is the extracellular space. It is found in the apoplast. The enzyme catalyses 4 hydroquinone + O2 = 4 benzosemiquinone + 2 H2O. Lignin degradation and detoxification of lignin-derived products. In Oryza sativa subsp. japonica (Rice), this protein is Putative laccase-11 (LAC11).